We begin with the raw amino-acid sequence, 440 residues long: Fibulin-7 (440 aa).

The signal sequence occupies residues 1–24; the sequence is MGPGSQRALFLLLLLLASPGARAF. The stretch at 28–73 forms a coiled coil; sequence LNKQQLLTTIRQLQQLLKGQETRFTEGIRNMKSRLAALQNTVNKMT. Residues 79–136 enclose the Sushi domain; that stretch reads VSCPALEAPPDGKKFGSKYLVDHEVYFTCNPGFQLVGPSSVVCLANGSWTGEQPRCRD. 11 disulfides stabilise this stretch: C81–C121, C107–C134, C140–C151, C145–C160, C162–C171, C229–C245, C241–C254, C256–C269, C275–C288, C282–C297, and C302–C319. N124 is a glycosylation site (N-linked (GlcNAc...) asparagine). In terms of domain architecture, EGF-like 1; calcium-binding spans 136-172; that stretch reads DISECSSQPCHNGGTCVEGINHYRCICPPGKTGNRCQ. An EGF-like 2; calcium-binding domain is found at 225–270; the sequence is DVNECEIYGQKGRPRLCMHACVNTPGSYRCTCPSGYRILADGKSCE. The 50-residue stretch at 271–320 folds into the EGF-like 3; calcium-binding domain; the sequence is DVDECAGPQHMCPRGTTCINTGGGFQCVNPECPEGSGNISYVKTSPFQCE. Residue N308 is glycosylated (N-linked (GlcNAc...) asparagine).

The protein belongs to the fibulin family. In terms of assembly, interacts with heparin, FBLN1, FN1 and DSPP. Preferentially binds dental mesenchyme cells and odontoblasts but not dental epithelial cells or nondental cells. Binding requires a heparan sulfate-containing receptor on the cell surface as well as an integrin. In terms of processing, N-glycosylated. As to expression, highly expressed in newborn incisors and molars. A weaker expression is seen in the brain, kidneys, muscles and bones.

The protein localises to the secreted. It localises to the extracellular space. Its subcellular location is the extracellular matrix. Functionally, an adhesion molecule that interacts with extracellular matrix molecules in developing teeth and may play important roles in differentiation and maintenance of odontoblasts as well as in dentin formation. This chain is Fibulin-7 (Fbln7), found in Mus musculus (Mouse).